A 461-amino-acid chain; its full sequence is Photosystem II CP43 reaction center protein (461 aa).

A propeptide spanning residues 1 to 2 (ME) is cleaved from the precursor. The residue at position 3 (Thr3) is an N-acetylthreonine. The residue at position 3 (Thr3) is a Phosphothreonine. The next 5 helical transmembrane spans lie at 57–81 (LFEV…PHLA), 122–143 (LLGP…KDRN), 166–188 (KALY…RKIT), 243–263 (KPFA…LSYS), and 279–300 (WFNN…ASQA). Residue Glu355 coordinates [CaMn4O5] cluster. A helical transmembrane segment spans residues 435 to 459 (RARAAAAGFEKGIDRDFEPVLSMTP).

This sequence belongs to the PsbB/PsbC family. PsbC subfamily. As to quaternary structure, PSII is composed of 1 copy each of membrane proteins PsbA, PsbB, PsbC, PsbD, PsbE, PsbF, PsbH, PsbI, PsbJ, PsbK, PsbL, PsbM, PsbT, PsbX, PsbY, PsbZ, Psb30/Ycf12, at least 3 peripheral proteins of the oxygen-evolving complex and a large number of cofactors. It forms dimeric complexes. Requires Binds multiple chlorophylls and provides some of the ligands for the Ca-4Mn-5O cluster of the oxygen-evolving complex. It may also provide a ligand for a Cl- that is required for oxygen evolution. PSII binds additional chlorophylls, carotenoids and specific lipids. as cofactor.

Its subcellular location is the plastid. It is found in the chloroplast thylakoid membrane. Its function is as follows. One of the components of the core complex of photosystem II (PSII). It binds chlorophyll and helps catalyze the primary light-induced photochemical processes of PSII. PSII is a light-driven water:plastoquinone oxidoreductase, using light energy to abstract electrons from H(2)O, generating O(2) and a proton gradient subsequently used for ATP formation. The polypeptide is Photosystem II CP43 reaction center protein (Gossypium barbadense (Sea Island cotton)).